Here is a 401-residue protein sequence, read N- to C-terminus: MAKVVLAYSGGLDTSVAIPWLKENYGYEVIAMSADLGQGEELAPLREKAIKSGASKIYIEDVRREFVEDYIFPTLKAGAVYEGKYLLGTSMARPLIAKKLVEIARKEGAEAVAHGATGKGNDQVRFELAVKALAPDLKIIAPWREWDIRSREDAVDYASARGIPVPVTRERPYSLDRNLWHLSHEGADLEDPGNEPPSDVLLLITPPEKAPDKPAYVKIEFERGVPVKLDGEALDPVTLIERLNKIAGENGVGIADMVENRLVGMKSRGVYETPGGTVLFLAHRELELLTLDRATLHFKEIVASRYAELVYDGMWFVPLREALDAFVDVTQRTVTGTVVMKLYKGNCTPAGVKSPYSLYDQELSTFGRDEIYNQRDAEGFINLFGLPLKVRALMEKKAGLR.

ATP-binding positions include 7–15 (AYSGGLDTS) and A34. Positions 85 and 90 each coordinate L-citrulline. Position 115 (G115) interacts with ATP. T117, N121, and D122 together coordinate L-aspartate. L-citrulline is bound at residue N121. R125, S174, S183, E259, and Y271 together coordinate L-citrulline.

The protein belongs to the argininosuccinate synthase family. Type 1 subfamily. Homotetramer.

It localises to the cytoplasm. The catalysed reaction is L-citrulline + L-aspartate + ATP = 2-(N(omega)-L-arginino)succinate + AMP + diphosphate + H(+). It participates in amino-acid biosynthesis; L-arginine biosynthesis; L-arginine from L-ornithine and carbamoyl phosphate: step 2/3. This chain is Argininosuccinate synthase, found in Pelotomaculum thermopropionicum (strain DSM 13744 / JCM 10971 / SI).